Reading from the N-terminus, the 113-residue chain is Putative pterin-4-alpha-carbinolamine dehydratase (113 aa).

The protein belongs to the pterin-4-alpha-carbinolamine dehydratase family.

The enzyme catalyses (4aS,6R)-4a-hydroxy-L-erythro-5,6,7,8-tetrahydrobiopterin = (6R)-L-erythro-6,7-dihydrobiopterin + H2O. This is Putative pterin-4-alpha-carbinolamine dehydratase from Nitrosospira multiformis (strain ATCC 25196 / NCIMB 11849 / C 71).